A 621-amino-acid polypeptide reads, in one-letter code: Solute carrier family 2, facilitated glucose transporter member 12 (621 aa).

Residues Met1–Ser48 lie on the Cytoplasmic side of the membrane. A helical transmembrane segment spans residues Val49 to Leu69. Residues Leu70–Glu84 are Extracellular-facing. The chain crosses the membrane as a helical span at residues Met85–Ile105. The Cytoplasmic segment spans residues Asp106 to Cys119. Residues Leu120 to Gly140 form a helical membrane-spanning segment. Position 141 (Arg141) is a topological domain, extracellular. The helical transmembrane segment at Ile142–Ile162 threads the bilayer. At Ala163–Glu176 the chain is on the cytoplasmic side. Residues Leu177–Phe197 form a helical membrane-spanning segment. Over His198–Lys201 the chain is Extracellular. A helical transmembrane segment spans residues Tyr202–Pro222. The Cytoplasmic segment spans residues Pro223–Arg282. The chain crosses the membrane as a helical span at residues Ile283 to Phe303. The Extracellular segment spans residues Tyr304–Ser321. The helical transmembrane segment at Leu322–Val342 threads the bilayer. The Cytoplasmic portion of the chain corresponds to Asp343–Thr349. A helical membrane pass occupies residues Phe350–Leu370. Residues Asn371–Ala470 lie on the Extracellular side of the membrane. Residues Asn375, Asn387, Asn400, and Asn405 are each glycosylated (N-linked (GlcNAc...) asparagine). A helical transmembrane segment spans residues Ser471–Leu491. The Cytoplasmic segment spans residues Ser492 to Arg502. The chain crosses the membrane as a helical span at residues Ala503–Leu523. Residues Thr524 to Pro532 lie on the Extracellular side of the membrane. A helical transmembrane segment spans residues Trp533–Ile553. Residues Pro554–Asn621 are Cytoplasmic-facing.

Belongs to the major facilitator superfamily. Sugar transporter (TC 2.A.1.1) family. Glucose transporter subfamily.

It localises to the cell membrane. Its subcellular location is the endomembrane system. The protein localises to the cytoplasm. The protein resides in the perinuclear region. The enzyme catalyses D-glucose(out) = D-glucose(in). In terms of biological role, insulin-independent facilitative glucose transporter. The sequence is that of Solute carrier family 2, facilitated glucose transporter member 12 from Macaca fascicularis (Crab-eating macaque).